Here is a 273-residue protein sequence, read N- to C-terminus: MFDLTGKNVCYVADCGGIALETCKVLMTKNIAKLAMLYSVENPQAIAQLQAIKPSTQIFFWTYDVTMAREDMKQYFDEVMVQMDYIDVLINGATLCDEQNIDDTINTNLTGMMNTCATVLPYMDKQQLGKGGLIVNVTSVVGLDPSPVFCAYSASKFGVIGFTRSLADPLYYTQNGVAVMAVCCGPTKMFVDRQLTAFLSYGQPFVDRLRTAPCQSTTICAKNIVKAIECAVNGRIWIADKGELELVKLHWYWHMADQLVNYMHSTSEEKDED.

11-34 lines the NAD(+) pocket; it reads YVADCGGIALETCKVLMTKNIAKL. Residue S139 coordinates substrate. Catalysis depends on Y152, which acts as the Proton acceptor.

The protein belongs to the short-chain dehydrogenases/reductases (SDR) family.

The chain is Alcohol dehydrogenase-related 31 kDa protein (Adhr) from Drosophila immigrans (Fruit fly).